Reading from the N-terminus, the 131-residue chain is Large-conductance mechanosensitive channel (131 aa).

2 consecutive transmembrane segments (helical) span residues 21-41 and 76-96; these read VGVI…ADVI and GMFI…FLMI.

It belongs to the MscL family. In terms of assembly, homopentamer.

The protein resides in the cell inner membrane. Channel that opens in response to stretch forces in the membrane lipid bilayer. May participate in the regulation of osmotic pressure changes within the cell. This chain is Large-conductance mechanosensitive channel, found in Histophilus somni (strain 129Pt) (Haemophilus somnus).